Reading from the N-terminus, the 348-residue chain is Nicotinate-nucleotide--dimethylbenzimidazole phosphoribosyltransferase (348 aa).

The active-site Proton acceptor is the Glu316.

The protein belongs to the CobT family.

The catalysed reaction is 5,6-dimethylbenzimidazole + nicotinate beta-D-ribonucleotide = alpha-ribazole 5'-phosphate + nicotinate + H(+). It functions in the pathway nucleoside biosynthesis; alpha-ribazole biosynthesis; alpha-ribazole from 5,6-dimethylbenzimidazole: step 1/2. In terms of biological role, catalyzes the synthesis of alpha-ribazole-5'-phosphate from nicotinate mononucleotide (NAMN) and 5,6-dimethylbenzimidazole (DMB). The sequence is that of Nicotinate-nucleotide--dimethylbenzimidazole phosphoribosyltransferase from Xanthomonas oryzae pv. oryzae (strain PXO99A).